We begin with the raw amino-acid sequence, 341 residues long: Barley B recombinant-like protein A (341 aa).

Over residues 48-62 the composition is skewed to basic residues; the sequence is HQHQQHVPHHHHQPH. 2 disordered regions span residues 48-95 and 150-234; these read HQHQ…MNFA and MQQQ…RKNI. Residues 68-77 are compositionally biased toward low complexity; that stretch reads GANGNANGGA. Positions 78-90 are enriched in pro residues; it reads MPPPPATEAPPSM. Residues 190–211 are compositionally biased toward basic residues; it reads PKKRQQGRQPKVPRAKKPKKSA.

Belongs to the BBR/BPC family.

The protein resides in the nucleus. Functionally, transcriptional regulator that specifically binds to GA-rich elements (GAGA-repeats) present in regulatory sequences of genes involved in developmental processes. The sequence is that of Barley B recombinant-like protein A from Oryza sativa subsp. japonica (Rice).